Consider the following 121-residue polypeptide: Natriuretic peptides B (121 aa).

An N-terminal signal peptide occupies residues 1-26; that stretch reads MDLLKVLSQMILFLLFLYLSPLGGHS. A disordered region spans residues 61-89; sequence LKDQGLTKEHPKRVLRSQGSTLRVQQRPQ. The segment covering 77 to 89 has biased composition (polar residues); the sequence is SQGSTLRVQQRPQ. The cysteines at positions 99 and 115 are disulfide-linked.

This sequence belongs to the natriuretic peptide family. The precursor molecule is proteolytically cleaved by the endoprotease Furin to produce brain natriuretic peptide 45. May undergo further proteolytic cleavage by various proteases such as DPP4, MME and possibly FAP, to give rise to a variety of shorter peptides. May be cleaved at Ser-91 by the prolyl endopeptidase FAP (seprase) activity (in vitro). May be degraded by IDE. During IDE degradation, the resulting products initially increase the activation of NPR1 and can also stimulate NPR2 to produce cGMP before the fragments are completely degraded and inactivated by IDE (in vitro). As to expression, expressed abundantly in the ventricle, and in a lesser extent in the atrium (at protein level).

Its subcellular location is the secreted. Its function is as follows. Cardiac hormone that plays a key role in mediating cardio-renal homeostasis. May also function as a paracrine antifibrotic factor in the heart. Acts by specifically binding and stimulating NPR1 to produce cGMP, which in turn activates effector proteins that drive various biological responses. Likely involved in regulating the extracellular fluid volume and maintaining the fluid-electrolyte balance through natriuresis, diuresis, kaluresis and chloruresis. This is Natriuretic peptides B (Nppb) from Mus musculus (Mouse).